A 252-amino-acid chain; its full sequence is Outer kinetochore KNL1 complex subunit ZWINT (252 aa).

The tract at residues 80–99 is disordered; the sequence is QSPDALASEDASRQKATETK. Residues 89 to 99 show a composition bias toward basic and acidic residues; that stretch reads DASRQKATETK. A coiled-coil region spans residues 120–221; sequence LSEALPQVKE…QRNQSYLQLL (102 aa). Residues S216 and S249 each carry the phosphoserine modification.

Component of the KNL1 complex composed of KNL1 and ZWINT. Part of the ten-subunit outer kinetochore KMN network that includes the KNL1, MIS12 and NDC80 complexes; a bioriented kinetochore contains approximately 150 copies of the network. Interacts with the MIS12 complex subunits MIS12 DSN1, and PMF1. Interacts with the NDC80 complex subunit NDC80 during mitosis. Interacts with ZW10. Interacts with CETN3.

It localises to the nucleus. It is found in the chromosome. The protein localises to the centromere. The protein resides in the kinetochore. Functionally, acts as a component of the outer kinetochore KNL1 complex that serves as a docking point for spindle assembly checkpoint components and mediates microtubule-kinetochore interactions. Kinetochores, consisting of a centromere-associated inner segment and a microtubule-contacting outer segment, play a crucial role in chromosome segregation by mediating the physical connection between centromeric DNA and spindle microtubules. The outer kinetochore is made up of the ten-subunit KMN network, comprising the MIS12, NDC80 and KNL1 complexes, and auxiliary microtubule-associated components; together they connect the outer kinetochore with the inner kinetochore, bind microtubules, and mediate interactions with mitotic checkpoint proteins that delay anaphase until chromosomes are bioriented on the spindle. Targets the RZZ complex to the kinetochore at prometaphase. Recruits MAD2L1 to the kinetochore, but is not required for BUB1B localization. In addition to orienting mitotic chromosomes, it is also essential for alignment of homologous chromosomes during meiotic metaphase I. In meiosis I, required to activate the spindle assembly checkpoint at unattached kinetochores to correct erroneous kinetochore-microtubule attachments. This chain is Outer kinetochore KNL1 complex subunit ZWINT (Zwint), found in Mus musculus (Mouse).